Reading from the N-terminus, the 1048-residue chain is Probable inactive receptor kinase At5g10020 (1048 aa).

An N-terminal signal peptide occupies residues 1–21; sequence MSHFLTFCFLSLLLLLHGANA. LRR repeat units follow at residues 100 to 120, 124 to 146, 148 to 169, 172 to 194, 196 to 217, 224 to 246, 250 to 272, 273 to 294, 298 to 319, 320 to 342, 365 to 387, 389 to 411, 412 to 433, 436 to 457, 469 to 491, 493 to 516, 517 to 539, and 540 to 560; these read RLRN…PSLG, SLQH…ISEL, SLNH…GFRN, QLRS…FTEL, NVEF…PMEN, TLRH…ESIG, NLEI…GSQP, SLRI…ELLQ, PLLE…INSS, TLTM…FKSC, TPDV…TSAF, RLSV…WGDS, QFSV…SFFT, SLRS…RGSR, QMEL…IGTM, KIKV…NKLS, GLLF…LPSQ, and MVGF…DLRS. The helical transmembrane segment at 602-622 threads the bilayer; it reads IAIIVASVGAAIMILFVLFAY. Positions 696-733 are disordered; sequence EQGAPATSAPTNLLDDYPAASGRKSSSGGSPLSSSPRF. The span at 716-733 shows a compositional bias: low complexity; the sequence is SGRKSSSGGSPLSSSPRF. Ser744 bears the Phosphoserine mark. Residues 768-1045 form the Protein kinase domain; sequence RAPAEVLGRS…IRQVLDHLTS (278 aa). Residues 774-782 and Lys796 contribute to the ATP site; that span reads LGRSSHGTL.

It belongs to the protein kinase superfamily.

The protein localises to the membrane. In Arabidopsis thaliana (Mouse-ear cress), this protein is Probable inactive receptor kinase At5g10020.